Reading from the N-terminus, the 449-residue chain is Trigger factor (449 aa).

In terms of domain architecture, PPIase FKBP-type spans 173 to 258; that stretch reads GDRVTLDFVG…LKKVEWAHLP (86 aa).

Belongs to the FKBP-type PPIase family. Tig subfamily.

It localises to the cytoplasm. It carries out the reaction [protein]-peptidylproline (omega=180) = [protein]-peptidylproline (omega=0). Functionally, involved in protein export. Acts as a chaperone by maintaining the newly synthesized protein in an open conformation. Functions as a peptidyl-prolyl cis-trans isomerase. The polypeptide is Trigger factor (Cupriavidus metallidurans (strain ATCC 43123 / DSM 2839 / NBRC 102507 / CH34) (Ralstonia metallidurans)).